A 481-amino-acid polypeptide reads, in one-letter code: Glutamate--cysteine ligase (481 aa).

The protein belongs to the glutamate--cysteine ligase type 1 family. Type 1 subfamily.

It catalyses the reaction L-cysteine + L-glutamate + ATP = gamma-L-glutamyl-L-cysteine + ADP + phosphate + H(+). It participates in sulfur metabolism; glutathione biosynthesis; glutathione from L-cysteine and L-glutamate: step 1/2. This Clostridium acetobutylicum (strain ATCC 824 / DSM 792 / JCM 1419 / IAM 19013 / LMG 5710 / NBRC 13948 / NRRL B-527 / VKM B-1787 / 2291 / W) protein is Glutamate--cysteine ligase.